Here is a 221-residue protein sequence, read N- to C-terminus: Germin-like protein subfamily 1 member 15 (221 aa).

Positions 1–21 (MKVSMSLILITFWALVTIAKA) are cleaved as a signal peptide. C31 and C48 are disulfide-bonded. The region spanning 62 to 213 (SGLNQAGITN…AFQLDVNVVK (152 aa)) is the Cupin type-1 domain. N77 carries N-linked (GlcNAc...) asparagine glycosylation. Mn(2+) is bound by residues H110, H112, E117, and H159.

Belongs to the germin family. In terms of assembly, oligomer (believed to be a pentamer but probably hexamer).

It localises to the secreted. It is found in the extracellular space. The protein localises to the apoplast. In terms of biological role, may play a role in plant defense. Probably has no oxalate oxidase activity even if the active site is conserved. The sequence is that of Germin-like protein subfamily 1 member 15 from Arabidopsis thaliana (Mouse-ear cress).